Consider the following 442-residue polypeptide: Microfibrillar-associated protein 1 (442 aa).

2 disordered regions span residues 1 to 34 and 113 to 203; these read MSAPSALVKQPPIQSTAGACPSRNEKGRAVYGEG and EVVS…PRLK. 2 stretches are compositionally biased toward acidic residues: residues 134–148 and 181–198; these read DTSEEEEEEIDDEEI and ESELESEYEEYTDSEDEM.

It belongs to the MFAP1 family. As to quaternary structure, component of the spliceosome B complex. Interacts with PRPF38A (via N-terminal interaction domain). In terms of tissue distribution, widely expressed.

Its subcellular location is the nucleus. In terms of biological role, involved in pre-mRNA splicing as a component of the spliceosome. This is Microfibrillar-associated protein 1 from Gallus gallus (Chicken).